A 309-amino-acid polypeptide reads, in one-letter code: Potassium channel subfamily K member 16 (309 aa).

Residues 1-13 (MPSAGLCSCWGGR) lie on the Cytoplasmic side of the membrane. Residues 14–34 (VLPLLLAYVCYLLLGATIFQL) form a helical membrane-spanning segment. Residues 98 to 116 (SFFFAGTVVTTIGYGNLAP) constitute an intramembrane region (pore-forming). Residues Thr-108, Ile-109, Gly-110, and Tyr-111 each coordinate K(+). Residues 108 to 113 (TIGYGN) are selectivity filter 1. Residues 120–140 (AGQVFCVFYALLGIPLNVIFL) form a helical membrane-spanning segment. The Cytoplasmic portion of the chain corresponds to 141–165 (NHLGTGLRAHLAAIERWEDRPRRSQ). Residues 166 to 186 (VLQVLGLALFLTLGTLVILIF) form a helical membrane-spanning segment. An intramembrane region (pore-forming) is located at residues 202 to 221 (GFYFAFITLSTIGFGDYVVG). Positions 212, 213, 214, and 215 each coordinate K(+). Residues 212 to 217 (TIGFGD) are selectivity filter 2. Residues 238-258 (IWILLGLAWLALILPLGPLLL) traverse the membrane as a helical segment. At 259-309 (HRCCQLWLLSLRQGCGAKAAPGRRPRRGSTAARGVQVTPQDFPISKKGLGS) the chain is on the cytoplasmic side.

This sequence belongs to the two pore domain potassium channel (TC 1.A.1.8) family. As to quaternary structure, homodimer; disulfide-linked. Heterodimer with KCNK17 and KCNK5. Highly expressed in pancreas, in both endocrine (alpha, beta, gamma, delta, and epsilon) and exocrine (acinar and ductal) cells. Expressed in pacreatic beta-cells (at protein level). Expressed in pacreatic delta-cells (at protein level). Not detectable in the other tissues tested.

The protein resides in the endoplasmic reticulum membrane. It is found in the cell membrane. It localises to the mitochondrion inner membrane. The enzyme catalyses K(+)(in) = K(+)(out). The catalysed reaction is Rb(+)(in) = Rb(+)(out). It catalyses the reaction Cs(+)(in) = Cs(+)(out). With respect to regulation, the channel conductance is stimulated by extracellular alkaline pH. Inhibited by Ba(2+) ions, quinine, quinidine, chloroform and halothane. K(+) channel that conducts voltage-dependent outward rectifying currents upon membrane depolarization. Voltage sensing is coupled to K(+) electrochemical gradient in an 'ion flux gating' mode where outward but not inward ion flow opens the gate. Homo- and heterodimerizes to form functional channels with distinct regulatory and gating properties. In pancreatic islets, conducts K(+) countercurrents for Ca(2+) release from the endoplasmic reticulum (ER) and regulates the frequency and duration of cytosolic Ca(2+) oscillations coupled to secretion of pancreatic hormones. In pancreatic beta cells, drives ER Ca(2+) efflux, which in turn activates Ca(2+)-dependent plasma membrane K(+) slow currents and cytosolic Ca(2+) influx, overall contributing to synchronous cytosolic Ca(2+) oscillations. Limits glucose-induced cytosolic Ca(2+) oscillations coupled to second-phase INS secretion. Contributes to beta cell adaptation to acute inflammation by maintaining normal cytosolic Ca(2+) levels and INS secretion. May regulate beta cell mitochondrial Ca(2+) levels either indirectly via ER Ca(2+) efflux or directly by hyperpolarizing the mitochondrial membrane potential. Limits mitochondrial Ca(2+) oscillations and ATP production involved in glucose homeostasis upon metabolic stress. In pancreatic delta cells, limits Ca(2+)-induced Ca(2+)-release involved in somatostatin secretion and modulates islet paracrine signaling involved in glucagon secretion. Permeable to other monovalent cations such as Rb(+) and Cs(+). This Homo sapiens (Human) protein is Potassium channel subfamily K member 16.